Consider the following 255-residue polypeptide: Protein NEN4 (255 aa).

The region spanning 11-174 (VFFDLETNVP…DDVRMNLEVL (164 aa)) is the Exonuclease domain. 2 residues coordinate Mg(2+): D14 and E16. Catalysis depends on H161, which acts as the Proton donor/acceptor. Residue D166 coordinates Mg(2+).

Mg(2+) serves as cofactor. Expressed in the sieve elements and phloem pole pericycle cells.

It is found in the nucleus. In terms of biological role, probable exonuclease required for enuclation of sieve elements. The polypeptide is Protein NEN4 (Arabidopsis thaliana (Mouse-ear cress)).